Here is a 33-residue protein sequence, read N- to C-terminus: Photosystem II reaction center protein Psb30 (33 aa).

The chain crosses the membrane as a helical span at residues 5–25; sequence LITQLASLILIVASGPIVIGL.

Belongs to the Psb30/Ycf12 family. PSII is composed of 1 copy each of membrane proteins PsbA, PsbB, PsbC, PsbD, PsbE, PsbF, PsbH, PsbI, PsbJ, PsbK, PsbL, PsbM, PsbT, PsbX, PsbY, PsbZ, Psb30/Ycf12, peripheral proteins of the oxygen-evolving complex and a large number of cofactors. It forms dimeric complexes.

The protein localises to the plastid. It is found in the chloroplast thylakoid membrane. In terms of biological role, a core subunit of photosystem II (PSII), probably helps stabilize the reaction center. The protein is Photosystem II reaction center protein Psb30 of Lepocinclis buetschlii.